The sequence spans 606 residues: Melanoma-associated antigen D2 (606 aa).

Disordered regions lie at residues 1-29 (MSDTSESGAGLTRFQAEASEKDSSSMMQT) and 52-204 (SEDV…GGRR). Ser2 is subject to N-acetylserine. At Ser5 the chain carries Phosphoserine. At Thr72 the chain carries Phosphothreonine. The segment covering 79–100 (PATQASSTTQLTDTQVLATENK) has biased composition (polar residues). Residues 122-131 (ETKKVSHVAD) are compositionally biased toward basic and acidic residues. Over residues 142–164 (EAAPSQASADEPEPESAAAQSQE) the composition is skewed to low complexity. Ser157 is modified (phosphoserine). The segment covering 171-181 (KVKAKKARKVK) has biased composition (basic residues). A phosphoserine mark is found at Ser190, Ser191, Ser194, Ser197, Ser244, and Ser247. A compositionally biased stretch (basic residues) spans 248 to 260 (PKARRGKARRRAA). The tract at residues 248-275 (PKARRGKARRRAAKLQSSQEPEAPPPRD) is disordered. Residues Ser264 and Ser265 each carry the phosphoserine modification. An MAGE domain is found at 279 to 478 (LQGRANDLVK…KEWAAQYREA (200 aa)). The segment at 534–563 (GAEAKAKAQESGSASTGASTSTNNSASASA) is disordered.

In terms of assembly, interacts with GNAS.

Functionally, regulates the expression, localization to the plasma membrane and function of the sodium chloride cotransporters SLC12A1 and SLC12A3, two key components of salt reabsorption in the distal renal tubule. This Pongo abelii (Sumatran orangutan) protein is Melanoma-associated antigen D2 (MAGED2).